The following is a 283-amino-acid chain: Pantothenate synthetase (283 aa).

M34 to H41 serves as a coordination point for ATP. The active-site Proton donor is H41. Q65 serves as a coordination point for (R)-pantoate. A beta-alanine-binding site is contributed by Q65. ATP is bound at residue G152–D155. Q158 serves as a coordination point for (R)-pantoate. ATP-binding positions include V181 and M189 to R192.

Belongs to the pantothenate synthetase family. Homodimer.

It localises to the cytoplasm. It catalyses the reaction (R)-pantoate + beta-alanine + ATP = (R)-pantothenate + AMP + diphosphate + H(+). It participates in cofactor biosynthesis; (R)-pantothenate biosynthesis; (R)-pantothenate from (R)-pantoate and beta-alanine: step 1/1. In terms of biological role, catalyzes the condensation of pantoate with beta-alanine in an ATP-dependent reaction via a pantoyl-adenylate intermediate. In Nitrobacter winogradskyi (strain ATCC 25391 / DSM 10237 / CIP 104748 / NCIMB 11846 / Nb-255), this protein is Pantothenate synthetase.